The chain runs to 387 residues: Phosphoglycerate kinase (387 aa).

Substrate is bound by residues Asp-21–Asn-23, Arg-36, His-59–Arg-62, Arg-113, and Arg-146. ATP contacts are provided by residues Lys-197, Glu-314, and Gly-340–Thr-343.

The protein belongs to the phosphoglycerate kinase family. In terms of assembly, monomer.

It is found in the cytoplasm. It catalyses the reaction (2R)-3-phosphoglycerate + ATP = (2R)-3-phospho-glyceroyl phosphate + ADP. It participates in carbohydrate degradation; glycolysis; pyruvate from D-glyceraldehyde 3-phosphate: step 2/5. In Vibrio cholerae serotype O1 (strain ATCC 39541 / Classical Ogawa 395 / O395), this protein is Phosphoglycerate kinase (pgk).